The chain runs to 183 residues: Glutathione-regulated potassium-efflux system ancillary protein KefG (183 aa).

It belongs to the NAD(P)H dehydrogenase (quinone) family. KefG subfamily. As to quaternary structure, interacts with KefB.

The protein resides in the cell inner membrane. The catalysed reaction is a quinone + NADH + H(+) = a quinol + NAD(+). It catalyses the reaction a quinone + NADPH + H(+) = a quinol + NADP(+). Regulatory subunit of a potassium efflux system that confers protection against electrophiles. Required for full activity of KefB. The protein is Glutathione-regulated potassium-efflux system ancillary protein KefG of Salmonella enteritidis PT4 (strain P125109).